Consider the following 432-residue polypeptide: Ribosomal protein uS12 methylthiotransferase RimO (432 aa).

Residues 1–112 (MKIGVVSLGC…ILNYLGLKEK (112 aa)) form the MTTase N-terminal domain. [4Fe-4S] cluster contacts are provided by C10, C46, C75, C134, C138, and C141. A Radical SAM core domain is found at 120–350 (STPRSYAYLK…MAIQRGITRK (231 aa)). In terms of domain architecture, TRAM spans 353-422 (EEFLGKEIEV…DYDLAGRDTE (70 aa)).

This sequence belongs to the methylthiotransferase family. RimO subfamily. [4Fe-4S] cluster is required as a cofactor.

Its subcellular location is the cytoplasm. It carries out the reaction L-aspartate(89)-[ribosomal protein uS12]-hydrogen + (sulfur carrier)-SH + AH2 + 2 S-adenosyl-L-methionine = 3-methylsulfanyl-L-aspartate(89)-[ribosomal protein uS12]-hydrogen + (sulfur carrier)-H + 5'-deoxyadenosine + L-methionine + A + S-adenosyl-L-homocysteine + 2 H(+). Catalyzes the methylthiolation of an aspartic acid residue of ribosomal protein uS12. The protein is Ribosomal protein uS12 methylthiotransferase RimO of Aquifex aeolicus (strain VF5).